Here is a 626-residue protein sequence, read N- to C-terminus: Myelin-associated glycoprotein (626 aa).

Residues 1–19 (MIFLTALPLFWIMISASRG) form the signal peptide. The interval 20 to 325 (GHWGAWMPSS…RTVGLSVMYA (306 aa)) is interaction with RTN4R and RTN4RL2. Residues 20 to 516 (GHWGAWMPSS…HRLMWAKIGP (497 aa)) are Extracellular-facing. In terms of domain architecture, Ig-like V-type spans 22 to 120 (WGAWMPSSIS…LGGKYYFRGD (99 aa)). Disulfide bonds link Cys37/Cys165, Cys42/Cys100, and Cys159/Cys217. Position 65 to 67 (65 to 67 (YPK)) interacts with a ganglioside GT1b (d18:1(4E)). Asn99 carries N-linked (GlcNAc...) asparagine glycosylation. A glycan (N-linked (GlcNAc...) asparagine; partial) is linked at Asn106. Residues Arg118 and 124–128 (YNQYT) each bind a ganglioside GT1b (d18:1(4E)). 4 Ig-like C2-type domains span residues 139-237 (NTPN…MDVK), 241-325 (VIVE…VMYA), 327-412 (WKPT…VEFA), and 413-508 (PVLL…GAHR). Residues Asn223 and Asn246 are each glycosylated (N-linked (GlcNAc...) asparagine). Cysteines 261 and 305 form a disulfide. Asn315 carries an N-linked (GlcNAc...) asparagine glycan. A disulfide bridge links Cys347 with Cys392. Asn406 carries N-linked (GlcNAc...) asparagine glycosylation. Intrachain disulfides connect Cys421–Cys430 and Cys432–Cys488. N-linked (GlcNAc...) asparagine glycans are attached at residues Asn450 and Asn454. Residues 517-536 (VGAVVAFAILIAIVCYITQT) form a helical membrane-spanning segment. Cys531 is lipidated: S-palmitoyl cysteine. Over 537-626 (RRKKNVTESP…LAEYAEIRVK (90 aa)) the chain is Cytoplasmic. Ser545, Ser547, and Ser549 each carry phosphoserine. Residues 577–626 (LGSERRLLGLRGEPPELDLSYSHSDLGKRPTKDSYTLTEELAEYAEIRVK) are required for normal axon myelination in the central nervous system. A disordered region spans residues 582–608 (RLLGLRGEPPELDLSYSHSDLGKRPTK).

The protein belongs to the immunoglobulin superfamily. SIGLEC (sialic acid binding Ig-like lectin) family. As to quaternary structure, monomer and homodimer. Interacts (via the first three N-terminal Ig-like domains) with RTN4R and RTN4RL2. Interacts with RTN4R. Interacts with isoform 2 of BSG. Post-translationally, N-glycosylated. In terms of processing, phosphorylated on tyrosine residues. Ubiquitinated, leading to proteasomal degradation. As to expression, both isoform 1 and isoform 2 are detected in myelinated structures in the central and peripheral nervous system, in periaxonal myelin and at Schmidt-Lanterman incisures. Detected in optic nerve, in oligodendroglia and in periaxonal myelin sheaths. Detected in compact myelin (at protein level). Both isoform 1 and isoform 2 are detected in the central and peripheral nervous system.

Its subcellular location is the cell membrane. The protein localises to the membrane raft. In terms of biological role, adhesion molecule that mediates interactions between myelinating cells and neurons by binding to neuronal sialic acid-containing gangliosides and to the glycoproteins RTN4R and RTN4RL2. Not required for initial myelination, but seems to play a role in the maintenance of normal axon myelination. Protects motoneurons against apoptosis, also after injury; protection against apoptosis is probably mediated via interaction with neuronal RTN4R and RTN4RL2. Required to prevent degeneration of myelinated axons in adults; this probably depends on binding to gangliosides on the axon cell membrane. Negative regulator of neurite outgrowth; in dorsal root ganglion neurons the inhibition is mediated primarily via binding to neuronal RTN4R or RTN4RL2 and to a lesser degree via binding to neuronal gangliosides. In cerebellar granule cells the inhibition is mediated primarily via binding to neuronal gangliosides. In sensory neurons, inhibition of neurite extension depends only partially on RTN4R, RTN4RL2 and gangliosides. Inhibits axon longitudinal growth. Inhibits axon outgrowth by binding to RTN4R. Preferentially binds to alpha-2,3-linked sialic acid. Binds ganglioside Gt1b. This chain is Myelin-associated glycoprotein (MAG), found in Homo sapiens (Human).